We begin with the raw amino-acid sequence, 386 residues long: S-adenosylmethionine synthase (386 aa).

Residue His-14 coordinates ATP. Asp-16 provides a ligand contact to Mg(2+). K(+) is bound at residue Glu-42. 2 residues coordinate L-methionine: Glu-55 and Gln-98. The segment at 98–108 is flexible loop; it reads QSGDISQGVDG. Residues 162–164, 230–231, Asp-239, 245–246, Ala-262, and Lys-266 each bind ATP; these read DSK, RF, and RK. Asp-239 contributes to the L-methionine binding site. An L-methionine-binding site is contributed by Lys-270.

It belongs to the AdoMet synthase family. In terms of assembly, homotetramer; dimer of dimers. It depends on Mg(2+) as a cofactor. The cofactor is K(+).

The protein localises to the cytoplasm. It carries out the reaction L-methionine + ATP + H2O = S-adenosyl-L-methionine + phosphate + diphosphate. The protein operates within amino-acid biosynthesis; S-adenosyl-L-methionine biosynthesis; S-adenosyl-L-methionine from L-methionine: step 1/1. In terms of biological role, catalyzes the formation of S-adenosylmethionine (AdoMet) from methionine and ATP. The overall synthetic reaction is composed of two sequential steps, AdoMet formation and the subsequent tripolyphosphate hydrolysis which occurs prior to release of AdoMet from the enzyme. The sequence is that of S-adenosylmethionine synthase from Salinibacter ruber (strain DSM 13855 / M31).